Here is a 211-residue protein sequence, read N- to C-terminus: 3-demethoxyubiquinol 3-hydroxylase (211 aa).

Fe cation-binding residues include E60, E90, H93, E142, E174, and H177.

Belongs to the COQ7 family. The cofactor is Fe cation.

It localises to the cell membrane. It carries out the reaction a 5-methoxy-2-methyl-3-(all-trans-polyprenyl)benzene-1,4-diol + AH2 + O2 = a 3-demethylubiquinol + A + H2O. The protein operates within cofactor biosynthesis; ubiquinone biosynthesis. Its function is as follows. Catalyzes the hydroxylation of 2-nonaprenyl-3-methyl-6-methoxy-1,4-benzoquinol during ubiquinone biosynthesis. The chain is 3-demethoxyubiquinol 3-hydroxylase from Herminiimonas arsenicoxydans.